The primary structure comprises 421 residues: Chitin deacetylase (421 aa).

Residues 1–21 form the signal peptide; sequence MQIKTFALSAAIAQVATLALA. N-linked (GlcNAc...) asparagine glycans are attached at residues asparagine 39, asparagine 70, asparagine 87, and asparagine 106. One can recognise a NodB homology domain in the interval 157–349; sequence ETWGLTYDDG…YKQVIDVATC (193 aa). Aspartate 164 (proton acceptor) is an active-site residue. Residue aspartate 164 participates in acetate binding. Aspartate 165 lines the Co(2+) pocket. Residue asparagine 168 is glycosylated (N-linked (GlcNAc...) asparagine). Histidine 214 and histidine 218 together coordinate Co(2+). Tyrosine 255 contacts acetate. A glycan (N-linked (GlcNAc...) asparagine) is linked at asparagine 307. The Proton donor role is filled by histidine 320. Asparagine 323, asparagine 351, and asparagine 367 each carry an N-linked (GlcNAc...) asparagine glycan. The GPI-anchor amidated threonine moiety is linked to residue threonine 390. Positions 391–421 are cleaved as a propeptide — removed in mature form; the sequence is AAAHIQASTSGAMSVLPNLALISAFIATLLF.

Belongs to the polysaccharide deacetylase family. It depends on Co(2+) as a cofactor.

The protein resides in the secreted. Its subcellular location is the cell wall. The protein localises to the cell membrane. It catalyses the reaction [(1-&gt;4)-N-acetyl-beta-D-glucosaminyl](n) + n H2O = chitosan + n acetate. Hydrolyzes the N-acetamido groups of N-acetyl-D-glucosamine residues in chitin to form chitosan and acetate. This Amylomyces rouxii (Filamentous fungus) protein is Chitin deacetylase.